The chain runs to 43 residues: uncharacterized protein (43 aa).

The segment covering M1 to N37 has biased composition (low complexity). The interval M1–K43 is disordered.

This is an uncharacterized protein from Dictyostelium discoideum (Social amoeba).